The chain runs to 403 residues: NADH-quinone oxidoreductase subunit D (403 aa).

Belongs to the complex I 49 kDa subunit family. As to quaternary structure, NDH-1 is composed of 14 different subunits. Subunits NuoB, C, D, E, F, and G constitute the peripheral sector of the complex.

The protein localises to the cell inner membrane. The catalysed reaction is a quinone + NADH + 5 H(+)(in) = a quinol + NAD(+) + 4 H(+)(out). Functionally, NDH-1 shuttles electrons from NADH, via FMN and iron-sulfur (Fe-S) centers, to quinones in the respiratory chain. The immediate electron acceptor for the enzyme in this species is believed to be ubiquinone. Couples the redox reaction to proton translocation (for every two electrons transferred, four hydrogen ions are translocated across the cytoplasmic membrane), and thus conserves the redox energy in a proton gradient. The chain is NADH-quinone oxidoreductase subunit D from Erythrobacter litoralis (strain HTCC2594).